The sequence spans 1413 residues: ABC-type transporter vrcC (1413 aa).

The 258-residue stretch at 108–365 folds into the ABC transporter 1 domain; the sequence is VWFEALALAR…FLDMGFACPE (258 aa). N-linked (GlcNAc...) asparagine glycosylation occurs at N289. Residues 476-496 traverse the membrane as a helical segment; that stretch reads VTISSLIGNVITALVIASIFY. Residue N501 is glycosylated (N-linked (GlcNAc...) asparagine). The next 2 membrane-spanning stretches (helical) occupy residues 510–530 and 564–584; these read ALLF…MLTL and VLNA…VLLG. N675 carries an N-linked (GlcNAc...) asparagine glycan. Residues 683–703 traverse the membrane as a helical segment; the sequence is IGIILAFMVVLGAIYLVATDF. Residues 725 to 748 are disordered; the sequence is SGKPDDFEGGSDRNASQEKSKSDR. N738 is a glycosylation site (N-linked (GlcNAc...) asparagine). Positions 739 to 748 are enriched in basic and acidic residues; the sequence is ASQEKSKSDR. An ABC transporter 2 domain is found at 761-1003; the sequence is FQWQDVCFDI…ILIDYFVRNG (243 aa). 6 consecutive transmembrane segments (helical) span residues 1105–1125, 1142–1162, 1191–1211, 1230–1250, 1266–1286, and 1290–1310; these read IYIY…GFSL, IFLL…HFVT, LFWN…PIGM, LLIW…IAAL, LCLL…FWIF, and VSPF…DTTV. An N-linked (GlcNAc...) asparagine glycan is attached at N1324. The helical transmembrane segment at 1378 to 1398 threads the bilayer; sequence FGLMWVFIFTNIVAACLLYWW.

The protein belongs to the ABC transporter superfamily. ABCG family. PDR (TC 3.A.1.205) subfamily.

It localises to the cell membrane. In terms of biological role, ABC-type transporter; part of the gene cluster that mediates the biosynthesis of the sesterterpene variecolin. VrcC is probably involved in the secretion of variecolin. This chain is ABC-type transporter vrcC, found in Aspergillus aculeatus (strain ATCC 16872 / CBS 172.66 / WB 5094).